We begin with the raw amino-acid sequence, 541 residues long: Reticulophagy regulator 2 (541 aa).

3 consecutive transmembrane segments (helical) span residues Leu75–Leu91, Phe99–Trp115, and Val199–Val219. Positions Leu249 to Leu282 are disordered. Basic residues predominate over residues His250–Gly260. Over residues Pro270–Ala280 the composition is skewed to acidic residues. At Thr274 the chain carries Phosphothreonine. Phosphoserine is present on residues Ser276, Ser278, Ser286, and Ser306. Residue Thr329 is modified to Phosphothreonine. Disordered regions lie at residues Val331–Glu389, Thr403–Ser440, and Pro459–Ala481. Ser332, Ser339, and Ser342 each carry phosphoserine. The segment covering Pro459–Ala475 has biased composition (low complexity). The LIR motif motif lies at Glu485 to Leu490. Residues Glu496–Pro541 form a disordered region. Over residues Glu507–Gly522 the composition is skewed to pro residues.

The protein belongs to the RETREG family. As to quaternary structure, interacts with ATG8 family modifier proteins MAP1LC3A, MAP1LC3B, GABARAP, GABARAPL1 and GABARAPL2. Interacts with CANX.

Its subcellular location is the endoplasmic reticulum membrane. Its function is as follows. Endoplasmic reticulum (ER)-anchored autophagy regulator which exists in an inactive state under basal conditions but is activated following cellular stress. When activated, induces ER fragmentation and mediates ER delivery into lysosomes through sequestration into autophagosomes via interaction with ATG8 family proteins. Required for collagen quality control in a LIR motif-independent manner. The protein is Reticulophagy regulator 2 (Retreg2) of Rattus norvegicus (Rat).